A 393-amino-acid polypeptide reads, in one-letter code: S-adenosylmethionine synthase 2 (393 aa).

Residue Glu9 coordinates Mg(2+). His15 serves as a coordination point for ATP. Glu43 is a binding site for K(+). 2 residues coordinate L-methionine: Glu56 and Gln99. Residues Asp167–Lys169, Ser235–Phe238, Asp246, Arg252–Lys253, Ala269, Lys273, and Lys277 each bind ATP. Residue Asp246 participates in L-methionine binding. Residue Lys277 participates in L-methionine binding.

The protein belongs to the AdoMet synthase family. Homotetramer. Mn(2+) is required as a cofactor. The cofactor is Mg(2+). Requires Co(2+) as cofactor. It depends on K(+) as a cofactor.

It is found in the cytoplasm. It catalyses the reaction L-methionine + ATP + H2O = S-adenosyl-L-methionine + phosphate + diphosphate. Its pathway is amino-acid biosynthesis; S-adenosyl-L-methionine biosynthesis; S-adenosyl-L-methionine from L-methionine: step 1/1. Catalyzes the formation of S-adenosylmethionine from methionine and ATP. The reaction comprises two steps that are both catalyzed by the same enzyme: formation of S-adenosylmethionine (AdoMet) and triphosphate, and subsequent hydrolysis of the triphosphate. May be involved in the synthesis of betain in response to abiotic stress such as high salinity. In Beta vulgaris (Sugar beet), this protein is S-adenosylmethionine synthase 2 (SAMS2).